The following is a 520-amino-acid chain: CBL-interacting serine/threonine-protein kinase 18 (520 aa).

2 disordered regions span residues 1–29 and 48–67; these read MAQA…PHPK and TDKD…SPRN. Residues 17 to 29 are compositionally biased toward pro residues; that stretch reads PDPPPPPPPPHPK. Positions 55 to 66 are enriched in low complexity; sequence SPQSPRSPRSPR. The Protein kinase domain maps to 74–328; that stretch reads YELGKLLGHG…IPEIMKNRWF (255 aa). Residues 80 to 88 and lysine 103 contribute to the ATP site; that span reads LGHGTFAKV. Catalysis depends on aspartate 196, which acts as the Proton acceptor. Positions 214 to 243 are activation loop; that stretch reads DFGLSAVAEQLRQDGLCHTFCGTPAYIAPE. Residue serine 218 is modified to Phosphoserine. A Phosphothreonine modification is found at threonine 232. Residues 349 to 368 form a disordered region; sequence EDEEEEASSSGRSSTVSESD. Low complexity predominate over residues 356-366; the sequence is SSSGRSSTVSE. The NAF domain maps to 382–406; sequence PRPSSLNAFDIISFSSGFDLSGLFE. The segment at 410–439 is PPI; that stretch reads GEGTRFVSGAPVSKIISKLEEIAKIVSFTV.

This sequence belongs to the protein kinase superfamily. CAMK Ser/Thr protein kinase family. SNF1 subfamily. As to quaternary structure, interacts with CBL1 and CBL9. It depends on Mn(2+) as a cofactor.

It catalyses the reaction L-seryl-[protein] + ATP = O-phospho-L-seryl-[protein] + ADP + H(+). The enzyme catalyses L-threonyl-[protein] + ATP = O-phospho-L-threonyl-[protein] + ADP + H(+). Functionally, CIPK serine-threonine protein kinases interact with CBL proteins. Binding of a CBL protein to the regulatory NAF domain of CIPK protein lead to the activation of the kinase in a calcium-dependent manner. This is CBL-interacting serine/threonine-protein kinase 18 (CIPK18) from Arabidopsis thaliana (Mouse-ear cress).